The primary structure comprises 502 residues: MPKKGKKPKLPLTDEEQLILFQQKLLADEEAAKKKERLLTQFLKDKLAKEEHNSSLNLNKINTQWRTVLREVKTRELHKDIEILSQIFERVVDCKDSVIKSLARDLTEAEEQYAHALRGHLHNVDQLLTLQRRRLSLLEENYNMELEVLTKEFETERKAILDHHDKEIHYLHDVFMAMEQNYVDSEYESKLEFQSMWDDLKNKNLEEKHFLRLQLENVVEDLWRRFQDALKNYTDATEDRKIAFETLKVKDEKSSKEIEVQMKKIQRLQEAISALKGKIVAHSREGEWQNQCIRNDKELVHVQLRKLKIQRTQARTESQENLVKLTLESNATLKALKKVVEKGEKILKLAEICRKFETEEEKVLPFYSSALTPEEQEEVEIQSQEEITEDLAKIMMDYLGMENFWKRYNKVKLEVLSLQHRRLQLLDISSKLREMLKQYLDGISVSDEVLSRLNPLFIVNHKSNLPQLPPSAAQPGGDRGPGGDRRLTYNVIEAAHIASHIL.

Coiled coils occupy residues 96–160 and 252–285; these read DSVI…RKAI and EKSSKEIEVQMKKIQRLQEAISALKGKIVAHSRE.

This sequence belongs to the DRC2 family. As to quaternary structure, component of the nexin-dynein regulatory complex (N-DRC). Interacts with DRC1.

It localises to the cytoplasm. The protein localises to the cytoskeleton. The protein resides in the flagellum basal body. It is found in the cell projection. Its subcellular location is the cilium. It localises to the flagellum. The protein localises to the flagellum axoneme. Functionally, component of the nexin-dynein regulatory complex (N-DRC), a key regulator of ciliary/flagellar motility which maintains the alignment and integrity of the distal axoneme and regulates microtubule sliding in motile axonemes. Plays a critical role in the assembly of N-DRC and also stabilizes the assembly of multiple inner dynein arms and radial spokes. Coassembles with DRC1 to form a central scaffold needed for assembly of the N-DRC and its attachment to the outer doublet microtubules. This is Dynein regulatory complex subunit 2 (Ccdc65) from Rattus norvegicus (Rat).